Consider the following 396-residue polypeptide: S-arrestin (396 aa).

The segment covering 375–386 (ARDPLKGELQAE) has biased composition (basic and acidic residues). Positions 375 to 396 (ARDPLKGELQAEEKEEEEDDEK) are disordered. Acidic residues predominate over residues 387-396 (EKEEEEDDEK).

It belongs to the arrestin family. Interacts with RHO (via the phosphorylated C-terminus).

The protein localises to the cell projection. It localises to the cilium. The protein resides in the photoreceptor outer segment. It is found in the membrane. In terms of biological role, binds to photoactivated, phosphorylated RHO and terminates RHO signaling via G-proteins by competing with G-proteins for the same binding site on RHO. May play a role in preventing light-dependent degeneration of retinal photoreceptor cells. In Xenopus laevis (African clawed frog), this protein is S-arrestin (sag).